The chain runs to 117 residues: UPF0342 protein LEUM_1212 (117 aa).

Belongs to the UPF0342 family.

The chain is UPF0342 protein LEUM_1212 from Leuconostoc mesenteroides subsp. mesenteroides (strain ATCC 8293 / DSM 20343 / BCRC 11652 / CCM 1803 / JCM 6124 / NCDO 523 / NBRC 100496 / NCIMB 8023 / NCTC 12954 / NRRL B-1118 / 37Y).